The primary structure comprises 480 residues: Reticulophagy regulator 1 (480 aa).

Residues 1–10 (MASPAPEEHA) show a composition bias toward basic and acidic residues. The tract at residues 1–41 (MASPAPEEHATQGCPATEEQEPRPGVPGEEAGPEGAGPQVE) is disordered. Residues 1-43 (MASPAPEEHATQGCPATEEQEPRPGVPGEEAGPEGAGPQVEEA) are Cytoplasmic-facing. The helical transmembrane segment at 44–64 (AGRVAAALTWLLGEPVLWLGW) threads the bilayer. At 65 to 78 (RADELLSWKRPLRS) the chain is on the lumenal side. The interval 67 to 216 (DELLSWKRPL…LLFAFLCPLF (150 aa)) is reticulon homology domain. A helical transmembrane segment spans residues 79–99 (LLAFLGANLLFWFLALTPWRV). At 100–101 (YH) the chain is on the cytoplasmic side. Residues 102-122 (LISVMILGRVIMQIIKDMVLS) traverse the membrane as a helical segment. The Lumenal portion of the chain corresponds to 123 to 191 (RARGAQLWRS…LVCSVCTFFT (69 aa)). Ser-132 is subject to Phosphoserine. Ser-134 carries the phosphoserine; by CAMK2B modification. Residue Ser-136 is modified to Phosphoserine. The helical transmembrane segment at 192-212 (ILGSYIPGVILSYLLLLFAFL) threads the bilayer. Residues 213-480 (CPLFKCNDIG…GFLSNLLGGH (268 aa)) are Cytoplasmic-facing. Polar residues predominate over residues 302 to 313 (FNLSEGYTPQTD). Residues 302–348 (FNLSEGYTPQTDTSDDLDRPSEEVFSRDLSDFPSLENGAGTNDEDEL) are disordered. The span at 317-331 (DLDRPSEEVFSRDLS) shows a compositional bias: basic and acidic residues. Positions 436–441 (DDFELL) match the LIR motif motif. Positions 450 to 480 (ESELGLTQDQGAEAQQSKKSSGFLSNLLGGH) are disordered. Over residues 454–473 (GLTQDQGAEAQQSKKSSGFL) the composition is skewed to polar residues.

This sequence belongs to the RETREG family. As to quaternary structure, homooligomer; oligomerization is enhanced following endoplasmic reticulum stress and is mediated by the reticulon homology domain. Interacts with ATG8 family modifier proteins MAP1LC3A, MAP1LC3B, GABARAP, GABARAPL1 and GABARAPL2. Phosphorylation at Ser-134 by CAMK2B enhances oligomerization and membrane scission and reticulophagy activity.

Its subcellular location is the golgi apparatus. It localises to the cis-Golgi network membrane. It is found in the endoplasmic reticulum membrane. Endoplasmic reticulum (ER)-anchored autophagy regulator which mediates ER delivery into lysosomes through sequestration into autophagosomes. Promotes membrane remodeling and ER scission via its membrane bending capacity and targets the fragments into autophagosomes via interaction with ATG8 family proteins. Active under basal conditions. Required for collagen quality control in a LIR motif-dependent manner. Required for long-term survival of nociceptive and autonomic ganglion neurons. The protein is Reticulophagy regulator 1 of Rattus norvegicus (Rat).